Here is a 51-residue protein sequence, read N- to C-terminus: Large ribosomal subunit protein eL39 (51 aa).

The protein belongs to the eukaryotic ribosomal protein eL39 family.

The protein is Large ribosomal subunit protein eL39 of Methanopyrus kandleri (strain AV19 / DSM 6324 / JCM 9639 / NBRC 100938).